The following is a 276-amino-acid chain: NADPH-dependent 7-cyano-7-deazaguanine reductase (276 aa).

Position 83 to 85 (83 to 85) interacts with substrate; that stretch reads IES. Position 85 to 86 (85 to 86) interacts with NADPH; it reads SK. Residue Cys-184 is the Thioimide intermediate of the active site. Asp-191 (proton donor) is an active-site residue. Residue 223–224 participates in substrate binding; sequence HE. 252 to 253 contributes to the NADPH binding site; that stretch reads RG.

It belongs to the GTP cyclohydrolase I family. QueF type 2 subfamily. As to quaternary structure, homodimer.

It localises to the cytoplasm. It carries out the reaction 7-aminomethyl-7-carbaguanine + 2 NADP(+) = 7-cyano-7-deazaguanine + 2 NADPH + 3 H(+). Its pathway is tRNA modification; tRNA-queuosine biosynthesis. Functionally, catalyzes the NADPH-dependent reduction of 7-cyano-7-deazaguanine (preQ0) to 7-aminomethyl-7-deazaguanine (preQ1). In Pseudomonas putida (strain W619), this protein is NADPH-dependent 7-cyano-7-deazaguanine reductase.